Reading from the N-terminus, the 686-residue chain is Rhophilin-2 (686 aa).

The REM-1 domain occupies 26–100 (NPLAQTGRSK…LEGLNISVGV (75 aa)). Residues 46 to 66 (QILKAMRMRTGAENLLKAATN) are interaction with Rho. A BRO1 domain is found at 111 to 460 (PLIPLGLKET…QLKYTQLRED (350 aa)). Residues 515-593 (RSIHFTAEEG…DDIEMKVVSL (79 aa)) form the PDZ domain. A Phosphothreonine modification is found at T655.

This sequence belongs to the RHPN family. As to quaternary structure, interacts with GTP-bound RhoA and RhoB. Interacts with both GTP- and GDP-bound RhoA. Interacts with KRT18.

It localises to the cytoplasm. The protein localises to the perinuclear region. Functionally, binds specifically to GTP-Rho. May function in a Rho pathway to limit stress fiber formation and/or increase the turnover of F-actin structures in the absence of high levels of RhoA activity. The sequence is that of Rhophilin-2 (RHPN2) from Bos taurus (Bovine).